The following is a 341-amino-acid chain: Glycerol-3-phosphate dehydrogenase [NAD(P)+] (341 aa).

NADPH-binding residues include serine 14, phenylalanine 15, arginine 35, and lysine 108. 2 residues coordinate sn-glycerol 3-phosphate: lysine 108 and glycine 136. Residue alanine 140 participates in NADPH binding. 5 residues coordinate sn-glycerol 3-phosphate: lysine 191, aspartate 244, serine 254, arginine 255, and asparagine 256. Catalysis depends on lysine 191, which acts as the Proton acceptor. Residue arginine 255 participates in NADPH binding. Positions 279 and 281 each coordinate NADPH.

It belongs to the NAD-dependent glycerol-3-phosphate dehydrogenase family.

It localises to the cytoplasm. It catalyses the reaction sn-glycerol 3-phosphate + NAD(+) = dihydroxyacetone phosphate + NADH + H(+). It carries out the reaction sn-glycerol 3-phosphate + NADP(+) = dihydroxyacetone phosphate + NADPH + H(+). The protein operates within membrane lipid metabolism; glycerophospholipid metabolism. Its function is as follows. Catalyzes the reduction of the glycolytic intermediate dihydroxyacetone phosphate (DHAP) to sn-glycerol 3-phosphate (G3P), the key precursor for phospholipid synthesis. This is Glycerol-3-phosphate dehydrogenase [NAD(P)+] from Pseudomonas entomophila (strain L48).